Consider the following 467-residue polypeptide: MNTVRSEKDSMGAIDVPADKLWGAQTQRSLEHFRISTEKMPTSLIHALALTKRAAAKVNEDLDLLSEEKASAIRQAADEVLAGQHDDEFPLAIWQTGSGTQSNMNMNEVLANRASELLGGVRGMERKVHPNDDVNKSQSSNDVFPTAMHVAALLALRKQLIPQLKTLTQTLSEKSRAFADIVKIGRTHLQDATPLTLGQEISGWVAMLEHNLKHIEYSLPHVAELALGGTAVGTGLNTHPEYARRVADELAVITCAPFVTAPNKFEALATCDALVQAHGALKGLAASLMKIANDVRWLASGPRCGIGEISIPENEPGSSIMPGKVNPTQCEALTMLCCQVMGNDVAINMGGASGNFELNVFRPMVIHNFLQSVRLLADGMESFNKHCAVGIEPNRERINQLLNESLMLVTALNTHIGYDKAAEIAKKAHKEGLTLKAAALALGYLSEAEFDSWVRPEQMVGSMKAGR.

Substrate-binding positions include 98 to 100, Arg126, 129 to 132, 139 to 141, and Thr187; these read SGT, HPND, and SSN. The active-site Proton donor/acceptor is His188. Residue Ser318 is part of the active site. Substrate contacts are provided by residues Ser319 and 324 to 326; that span reads KVN.

This sequence belongs to the class-II fumarase/aspartase family. Fumarase subfamily. As to quaternary structure, homotetramer.

The protein resides in the cytoplasm. It carries out the reaction (S)-malate = fumarate + H2O. The protein operates within carbohydrate metabolism; tricarboxylic acid cycle; (S)-malate from fumarate: step 1/1. Involved in the TCA cycle. Catalyzes the stereospecific interconversion of fumarate to L-malate. The sequence is that of Fumarate hydratase class II from Shigella flexneri.